The primary structure comprises 463 residues: Glutamyl-tRNA reductase (463 aa).

Substrate is bound by residues Thr-49–Arg-52, Ser-109, Glu-114–Gln-116, and Gln-120. The Nucleophile role is filled by Cys-50. Gly-196–Ser-201 serves as a coordination point for NADP(+).

Belongs to the glutamyl-tRNA reductase family. As to quaternary structure, homodimer.

It catalyses the reaction (S)-4-amino-5-oxopentanoate + tRNA(Glu) + NADP(+) = L-glutamyl-tRNA(Glu) + NADPH + H(+). Its pathway is porphyrin-containing compound metabolism; protoporphyrin-IX biosynthesis; 5-aminolevulinate from L-glutamyl-tRNA(Glu): step 1/2. Catalyzes the NADPH-dependent reduction of glutamyl-tRNA(Glu) to glutamate 1-semialdehyde (GSA). This chain is Glutamyl-tRNA reductase, found in Corynebacterium glutamicum (strain ATCC 13032 / DSM 20300 / JCM 1318 / BCRC 11384 / CCUG 27702 / LMG 3730 / NBRC 12168 / NCIMB 10025 / NRRL B-2784 / 534).